Here is a 235-residue protein sequence, read N- to C-terminus: Large ribosomal subunit protein uL1 (235 aa).

It belongs to the universal ribosomal protein uL1 family. Part of the 50S ribosomal subunit.

Its function is as follows. Binds directly to 23S rRNA. The L1 stalk is quite mobile in the ribosome, and is involved in E site tRNA release. Protein L1 is also a translational repressor protein, it controls the translation of the L11 operon by binding to its mRNA. The chain is Large ribosomal subunit protein uL1 from Methylobacterium sp. (strain 4-46).